A 234-amino-acid chain; its full sequence is Thiamine-phosphate synthase (234 aa).

Residues Gln65–Lys69 and Asn97 contribute to the 4-amino-2-methyl-5-(diphosphooxymethyl)pyrimidine site. Mg(2+)-binding residues include Asp98 and Asp117. Ser136 is a 4-amino-2-methyl-5-(diphosphooxymethyl)pyrimidine binding site. A 2-[(2R,5Z)-2-carboxy-4-methylthiazol-5(2H)-ylidene]ethyl phosphate-binding site is contributed by Ser163–Thr165. Lys166 contributes to the 4-amino-2-methyl-5-(diphosphooxymethyl)pyrimidine binding site. 2-[(2R,5Z)-2-carboxy-4-methylthiazol-5(2H)-ylidene]ethyl phosphate contacts are provided by residues Gly192 and Ile212–Ser213.

The protein belongs to the thiamine-phosphate synthase family. Requires Mg(2+) as cofactor.

It catalyses the reaction 2-[(2R,5Z)-2-carboxy-4-methylthiazol-5(2H)-ylidene]ethyl phosphate + 4-amino-2-methyl-5-(diphosphooxymethyl)pyrimidine + 2 H(+) = thiamine phosphate + CO2 + diphosphate. It carries out the reaction 2-(2-carboxy-4-methylthiazol-5-yl)ethyl phosphate + 4-amino-2-methyl-5-(diphosphooxymethyl)pyrimidine + 2 H(+) = thiamine phosphate + CO2 + diphosphate. The catalysed reaction is 4-methyl-5-(2-phosphooxyethyl)-thiazole + 4-amino-2-methyl-5-(diphosphooxymethyl)pyrimidine + H(+) = thiamine phosphate + diphosphate. It functions in the pathway cofactor biosynthesis; thiamine diphosphate biosynthesis; thiamine phosphate from 4-amino-2-methyl-5-diphosphomethylpyrimidine and 4-methyl-5-(2-phosphoethyl)-thiazole: step 1/1. Functionally, condenses 4-methyl-5-(beta-hydroxyethyl)thiazole monophosphate (THZ-P) and 2-methyl-4-amino-5-hydroxymethyl pyrimidine pyrophosphate (HMP-PP) to form thiamine monophosphate (TMP). The polypeptide is Thiamine-phosphate synthase (Xylella fastidiosa (strain Temecula1 / ATCC 700964)).